The chain runs to 357 residues: Ubiquitin carboxyl-terminal hydrolase 2 (357 aa).

In terms of domain architecture, USP spans 19–351; the sequence is TGLRNLGNTC…DAYLLFYELA (333 aa). The active-site Nucleophile is Cys-28. Residues Cys-177, Cys-180, Cys-228, and Cys-231 each contribute to the Zn(2+) site. Residue His-309 is the Proton acceptor of the active site.

It belongs to the peptidase C19 family. USP2 subfamily. In terms of assembly, homooligomer.

The protein resides in the cytoplasm. The protein localises to the perinuclear region. The catalysed reaction is Thiol-dependent hydrolysis of ester, thioester, amide, peptide and isopeptide bonds formed by the C-terminal Gly of ubiquitin (a 76-residue protein attached to proteins as an intracellular targeting signal).. Hydrolase that deubiquitinates polyubiquitinated target proteins such as MDM2, MDM4 and CCND1. Possesses both ubiquitin-specific peptidase and isopeptidase activities. May play a role in the regulation of the circadian clock. The polypeptide is Ubiquitin carboxyl-terminal hydrolase 2 (USP2) (Gallus gallus (Chicken)).